A 796-amino-acid polypeptide reads, in one-letter code: Fibroblast growth factor receptor 3 (796 aa).

Residues 1-19 form the signal peptide; that stretch reads MLVWLCGLCLVTLAGGRSA. At 20–358 the chain is on the extracellular side; the sequence is ARLPLTEGRP…AEPVPDVDTS (339 aa). An Ig-like C2-type 1 domain is found at 21–119; sequence RLPLTEGRPT…VLRNVTVRVT (99 aa). Cys-56 and Cys-102 form a disulfide bridge. N-linked (GlcNAc...) asparagine glycosylation is found at Asn-91 and Asn-113. The disordered stretch occupies residues 117–142; it reads RVTDSPSSGDDEDDDEESESANAPKF. Residues 125–135 are compositionally biased toward acidic residues; the sequence is GDDEDDDEESE. Ig-like C2-type domains follow at residues 140 to 233 and 239 to 344; these read PKFT…YTLD and PHRP…AWLT. A disulfide bridge connects residues Cys-165 and Cys-217. N-linked (GlcNAc...) asparagine glycosylation is found at Asn-214, Asn-251, Asn-283, Asn-304, and Asn-317. The cysteines at positions 264 and 328 are disulfide-linked. Residues 359–379 traverse the membrane as a helical segment; it reads VSILAAAGCVAVVILVVIIIF. Over 380–796 the chain is Cytoplasmic; that stretch reads TYKMKMPSKK…HQQYNGVIRT (417 aa). The Protein kinase domain occupies 457 to 746; it reads LTLGKPLGEG…LTVTSTDEYL (290 aa). ATP contacts are provided by residues 463–471 and Lys-493; that span reads LGEGCFGQV. The active-site Proton acceptor is Asp-602. A phosphotyrosine; by autocatalysis mark is found at Tyr-632, Tyr-633, Tyr-709, and Tyr-745.

Belongs to the protein kinase superfamily. Tyr protein kinase family. Fibroblast growth factor receptor subfamily. As to quaternary structure, monomer. Homodimer after ligand binding. Post-translationally, autophosphorylated. Binding of FGF family members together with heparan sulfate proteoglycan or heparin promotes receptor dimerization and autophosphorylation on tyrosine residues. Autophosphorylation occurs in trans between the two FGFR molecules present in the dimer. As to expression, undetectable in the adult skeletal muscle. Low levels of expression were detected in the liver, lung and kidney. Medium levels of expression were detected in the heart, spleen, intestine and eye. Highest expression is observed in the testis.

It localises to the cell membrane. It catalyses the reaction L-tyrosyl-[protein] + ATP = O-phospho-L-tyrosyl-[protein] + ADP + H(+). Present in an inactive conformation in the absence of bound ligand. Ligand binding leads to dimerization and activation by autophosphorylation on tyrosine residues. Functionally, tyrosine-protein kinase that acts as a cell-surface receptor for fibroblast growth factors and plays an essential role in the regulation of cell proliferation, differentiation and apoptosis. Plays an essential role in the regulation of chondrocyte differentiation, proliferation and apoptosis, and is required for normal skeleton development. Regulates both osteogenesis and postnatal bone mineralization by osteoblasts. Promotes apoptosis in chondrocytes, but can also promote cancer cell proliferation. Phosphorylates PLCG1, CBL and FRS2. Ligand binding leads to the activation of several signaling cascades. Activation of PLCG1 leads to the production of the cellular signaling molecules diacylglycerol and inositol 1,4,5-trisphosphate. Phosphorylation of FRS2 triggers recruitment of GRB2, GAB1, PIK3R1 and SOS1, and mediates activation of RAS, MAPK1/ERK2, MAPK3/ERK1 and the MAP kinase signaling pathway, as well as of the AKT1 signaling pathway. This chain is Fibroblast growth factor receptor 3 (FGFR3), found in Pleurodeles waltl (Iberian ribbed newt).